The sequence spans 435 residues: ATP-dependent protease ATPase subunit HslU (435 aa).

ATP contacts are provided by residues isoleucine 18, glycine 60–glutamate 65, aspartate 248, glutamate 313, and arginine 385.

Belongs to the ClpX chaperone family. HslU subfamily. As to quaternary structure, a double ring-shaped homohexamer of HslV is capped on each side by a ring-shaped HslU homohexamer. The assembly of the HslU/HslV complex is dependent on binding of ATP.

Its subcellular location is the cytoplasm. Its function is as follows. ATPase subunit of a proteasome-like degradation complex; this subunit has chaperone activity. The binding of ATP and its subsequent hydrolysis by HslU are essential for unfolding of protein substrates subsequently hydrolyzed by HslV. HslU recognizes the N-terminal part of its protein substrates and unfolds these before they are guided to HslV for hydrolysis. This Rhizobium leguminosarum bv. trifolii (strain WSM2304) protein is ATP-dependent protease ATPase subunit HslU.